Reading from the N-terminus, the 104-residue chain is Thioredoxin-2 (104 aa).

Residues Val-2–Val-104 form the Thioredoxin domain. Residues Cys-31 and Cys-34 each act as nucleophile in the active site. Cys-31 and Cys-34 are disulfide-bonded. Residue Ser-62 is modified to Phosphoserine. Glycyl lysine isopeptide (Lys-Gly) (interchain with G-Cter in ubiquitin) cross-links involve residues Lys-67 and Lys-97.

It belongs to the thioredoxin family. As to quaternary structure, monomer. Part of the heterodimeric LMA1 complex together with the proteinase inhibitor PBI2. LMA1 binds to the ATPase SEC18. Reversible disulfide bond formation between Cys-31 and Cys-34, reverted by thioredoxin reductase TRR1 using NADPH as hydrogen donor.

Its subcellular location is the cytoplasm. It is found in the golgi apparatus membrane. The protein localises to the nucleus. Participates as a hydrogen donor in redox reactions through the reversible oxidation of its active center dithiol to a disulfide, accompanied by the transfer of 2 electrons and 2 protons. It is involved in many cellular processes, including deoxyribonucleotide synthesis, repair of oxidatively damaged proteins, protein folding, sulfur metabolism, and redox homeostasis. Thioredoxin-dependent enzymes include phosphoadenosine-phosphosulfate reductase MET16, alkyl-hydroperoxide reductase DOT5, thioredoxin peroxidases TSA1 and TSA2, alkyl hydroperoxide reductase AHP1, and peroxiredoxin HYR1. Thioredoxin is also involved in protection against reducing stress. As part of the LMA1 complex, it is involved in the facilitation of vesicle fusion such as homotypic vacuole and ER-derived COPII vesicle fusion with the Golgi. This activity does not require the redox mechanism. Through its capacity to inactivate the stress response transcription factor YAP1 and its regulator the hydroperoxide stress sensor HYR1, it is involved in feedback regulation of stress response gene expression upon oxidative stress. This chain is Thioredoxin-2 (TRX2), found in Saccharomyces cerevisiae (strain ATCC 204508 / S288c) (Baker's yeast).